The chain runs to 213 residues: Thiamine-phosphate synthase (213 aa).

4-amino-2-methyl-5-(diphosphooxymethyl)pyrimidine is bound by residues 41–45 and Asn73; that span reads QFRVK. Positions 74 and 93 each coordinate Mg(2+). Thr112 contacts 4-amino-2-methyl-5-(diphosphooxymethyl)pyrimidine. Residue 139–141 participates in 2-[(2R,5Z)-2-carboxy-4-methylthiazol-5(2H)-ylidene]ethyl phosphate binding; that stretch reads SAT. Lys142 is a 4-amino-2-methyl-5-(diphosphooxymethyl)pyrimidine binding site. Residue Gly171 coordinates 2-[(2R,5Z)-2-carboxy-4-methylthiazol-5(2H)-ylidene]ethyl phosphate.

This sequence belongs to the thiamine-phosphate synthase family. Requires Mg(2+) as cofactor.

It catalyses the reaction 2-[(2R,5Z)-2-carboxy-4-methylthiazol-5(2H)-ylidene]ethyl phosphate + 4-amino-2-methyl-5-(diphosphooxymethyl)pyrimidine + 2 H(+) = thiamine phosphate + CO2 + diphosphate. It carries out the reaction 2-(2-carboxy-4-methylthiazol-5-yl)ethyl phosphate + 4-amino-2-methyl-5-(diphosphooxymethyl)pyrimidine + 2 H(+) = thiamine phosphate + CO2 + diphosphate. The catalysed reaction is 4-methyl-5-(2-phosphooxyethyl)-thiazole + 4-amino-2-methyl-5-(diphosphooxymethyl)pyrimidine + H(+) = thiamine phosphate + diphosphate. It functions in the pathway cofactor biosynthesis; thiamine diphosphate biosynthesis; thiamine phosphate from 4-amino-2-methyl-5-diphosphomethylpyrimidine and 4-methyl-5-(2-phosphoethyl)-thiazole: step 1/1. In terms of biological role, condenses 4-methyl-5-(beta-hydroxyethyl)thiazole monophosphate (THZ-P) and 2-methyl-4-amino-5-hydroxymethyl pyrimidine pyrophosphate (HMP-PP) to form thiamine monophosphate (TMP). The sequence is that of Thiamine-phosphate synthase from Erythrobacter litoralis (strain HTCC2594).